We begin with the raw amino-acid sequence, 285 residues long: MTHNHDPYSDAAALKGLTLGQATAYQAEYDASLLQGVPRKLNRDAIQLSGELPFHGTDIWTGYELSWLNAKGKPVVAILEVQLDINSVNLIESKSFKLYLNSFNQTKFDSVEAVQETLSRDLAACAEGEVTVKVIEPKHFNLERIIDLPGTCIDDLDIEVTEYEFNPDHLIGGTDPDKNVAETLNSNLLKSNCLITSQPDWGSVMVRYQGPKIDREKLLRYLISFRQHNEFHEQCVERIFVDLKKYCQCTKLTVYARYTRRGGLDINPYRSDFENPPESNRLARQ.

Substrate is bound at residue 91-93; that stretch reads IES. 93 to 94 provides a ligand contact to NADPH; it reads SK. Cysteine 193 serves as the catalytic Thioimide intermediate. Catalysis depends on aspartate 200, which acts as the Proton donor. 232-233 contacts substrate; that stretch reads HE. 261-262 provides a ligand contact to NADPH; it reads RG.

This sequence belongs to the GTP cyclohydrolase I family. QueF type 2 subfamily. Homodimer.

Its subcellular location is the cytoplasm. It carries out the reaction 7-aminomethyl-7-carbaguanine + 2 NADP(+) = 7-cyano-7-deazaguanine + 2 NADPH + 3 H(+). Its pathway is tRNA modification; tRNA-queuosine biosynthesis. In terms of biological role, catalyzes the NADPH-dependent reduction of 7-cyano-7-deazaguanine (preQ0) to 7-aminomethyl-7-deazaguanine (preQ1). This Shewanella frigidimarina (strain NCIMB 400) protein is NADPH-dependent 7-cyano-7-deazaguanine reductase.